A 408-amino-acid polypeptide reads, in one-letter code: Hepatocyte nuclear factor 4-gamma (408 aa).

The segment at residues 9–84 is a DNA-binding region (nuclear receptor); the sequence is NCLCAICGDR…AGMKKEAVQN (76 aa). 2 consecutive NR C4-type zinc fingers follow at residues 12 to 32 and 48 to 72; these read CAICGDRATGKHYGASSCDGC and CRFSRQCVVDKDKRNQCRYCRLRKC. The residue at position 94 (S94) is a Phosphoserine. The NR LBD domain maps to 99–328; sequence SNIPSINTLA…NLLQEMLLGG (230 aa). The tract at residues 368–390 is disordered; that stretch reads ISTPETPLPSPPQGSGQEQYKIA. Residues T370 and T373 each carry the phosphothreonine modification. At S377 the chain carries Phosphoserine.

It belongs to the nuclear hormone receptor family. NR2 subfamily. As to expression, expressed in pancreas, kidney, small intestine and testis. Weakly expressed in colon. Not expressed in liver, skeletal muscle, lung, placenta, brain, heart, peripheral blood, ovary, prostate, thymus and spleen.

The protein localises to the nucleus. In terms of biological role, transcription factor. Has a lower transcription activation potential than HNF4-alpha. This chain is Hepatocyte nuclear factor 4-gamma (HNF4G), found in Homo sapiens (Human).